The chain runs to 212 residues: Octanoyltransferase (212 aa).

Positions 31–209 (AETQDEIWLV…HFADLLGYNI (179 aa)) constitute a BPL/LPL catalytic domain. Residues 70–77 (RGGQITYH), 138–140 (SLG), and 151–153 (GLA) each bind substrate. Residue C169 is the Acyl-thioester intermediate of the active site.

This sequence belongs to the LipB family.

The protein resides in the cytoplasm. It carries out the reaction octanoyl-[ACP] + L-lysyl-[protein] = N(6)-octanoyl-L-lysyl-[protein] + holo-[ACP] + H(+). It functions in the pathway protein modification; protein lipoylation via endogenous pathway; protein N(6)-(lipoyl)lysine from octanoyl-[acyl-carrier-protein]: step 1/2. Catalyzes the transfer of endogenously produced octanoic acid from octanoyl-acyl-carrier-protein onto the lipoyl domains of lipoate-dependent enzymes. Lipoyl-ACP can also act as a substrate although octanoyl-ACP is likely to be the physiological substrate. The protein is Octanoyltransferase of Haemophilus influenzae (strain PittGG).